Reading from the N-terminus, the 281-residue chain is Pantothenate synthetase (281 aa).

30–37 serves as a coordination point for ATP; it reads MGALHRGH. The active-site Proton donor is the H37. Q61 contacts (R)-pantoate. Position 61 (Q61) interacts with beta-alanine. An ATP-binding site is contributed by 147–150; the sequence is GEKD. Q153 is a binding site for (R)-pantoate. ATP-binding positions include I176 and 184–187; that span reads LSSR.

Belongs to the pantothenate synthetase family. As to quaternary structure, homodimer.

It localises to the cytoplasm. The enzyme catalyses (R)-pantoate + beta-alanine + ATP = (R)-pantothenate + AMP + diphosphate + H(+). The protein operates within cofactor biosynthesis; (R)-pantothenate biosynthesis; (R)-pantothenate from (R)-pantoate and beta-alanine: step 1/1. Its function is as follows. Catalyzes the condensation of pantoate with beta-alanine in an ATP-dependent reaction via a pantoyl-adenylate intermediate. This Porphyromonas gingivalis (strain ATCC 33277 / DSM 20709 / CIP 103683 / JCM 12257 / NCTC 11834 / 2561) protein is Pantothenate synthetase.